An 882-amino-acid polypeptide reads, in one-letter code: Alanine--tRNA ligase (882 aa).

Residues His-564, His-568, Cys-666, and His-670 each contribute to the Zn(2+) site.

Belongs to the class-II aminoacyl-tRNA synthetase family. Zn(2+) is required as a cofactor.

The protein localises to the cytoplasm. It catalyses the reaction tRNA(Ala) + L-alanine + ATP = L-alanyl-tRNA(Ala) + AMP + diphosphate. In terms of biological role, catalyzes the attachment of alanine to tRNA(Ala) in a two-step reaction: alanine is first activated by ATP to form Ala-AMP and then transferred to the acceptor end of tRNA(Ala). Also edits incorrectly charged Ser-tRNA(Ala) and Gly-tRNA(Ala) via its editing domain. In Rubrobacter xylanophilus (strain DSM 9941 / JCM 11954 / NBRC 16129 / PRD-1), this protein is Alanine--tRNA ligase.